The primary structure comprises 88 residues: Large ribosomal subunit protein bL31B (88 aa).

It belongs to the bacterial ribosomal protein bL31 family. Type B subfamily. As to quaternary structure, part of the 50S ribosomal subunit.

The protein is Large ribosomal subunit protein bL31B of Burkholderia orbicola (strain MC0-3).